A 151-amino-acid chain; its full sequence is Large ribosomal subunit protein bL9 (151 aa).

Belongs to the bacterial ribosomal protein bL9 family.

Functionally, binds to the 23S rRNA. This chain is Large ribosomal subunit protein bL9, found in Oenococcus oeni (strain ATCC BAA-331 / PSU-1).